We begin with the raw amino-acid sequence, 599 residues long: Beta-glucuronidase (599 aa).

D-glucuronate contacts are provided by Asp-160 and Asn-407. Residue Glu-408 is the Proton donor of the active site. Residues Asn-462, Tyr-468, Glu-501, Trp-546, and Lys-565 each coordinate D-glucuronate. Glu-501 (nucleophile) is an active-site residue. An N-K motif motif is present at residues 563 to 565 (NHK).

Belongs to the glycosyl hydrolase 2 family.

The enzyme catalyses a beta-D-glucuronoside + H2O = D-glucuronate + an alcohol. Its activity is regulated as follows. Inhibited by a set of synthetic compounds like thio-urea derivatives and analogs. Inhibitors of gut microbial beta-glucuronidases are expected to block the reactivation of glucuronidated cancer drugs, and to alleviate drug-induced GI toxicity. Functionally, displays beta-glucuronidase activity with the artificial substrate p-nitrophenyl-beta-D-glucuronide (PNPG). Is likely capable of scavenging glucuronate from a range of chemically distinct xenobiotic and endobiotic glucuronides present in the gastrointestinal (GI) tract, to be able to utilize these diverse sources of carbon. As part of the GI microbiome, this enzyme would be able to reactivate glucuronide drug conjugates, such reactivated compounds can significantly damage the GI tract. The protein is Beta-glucuronidase of Streptococcus agalactiae serotype V (strain ATCC BAA-611 / 2603 V/R).